A 120-amino-acid polypeptide reads, in one-letter code: C-type natriuretic peptide 4 (120 aa).

The signal sequence occupies residues 1 to 22; it reads MNLSYLVACGLMITLLSVRMGA. The propeptide occupies 23 to 96; that stretch reads KPLSQAQQKS…PRRHKTGIKK (74 aa). Cysteine 104 and cysteine 120 are joined by a disulfide.

The protein belongs to the natriuretic peptide family.

Its subcellular location is the secreted. In terms of biological role, exhibits natriuretic and vasodepressant activity. Has cGMP-stimulating activity. May help to regulate body fluid homeostasis in a variety of aquatic environments. The protein is C-type natriuretic peptide 4 of Takifugu rubripes (Japanese pufferfish).